The following is a 152-amino-acid chain: Nucleoside diphosphate kinase (152 aa).

6 residues coordinate ATP: lysine 11, phenylalanine 59, arginine 87, threonine 93, arginine 104, and asparagine 114. The active-site Pros-phosphohistidine intermediate is histidine 117.

Belongs to the NDK family. As to quaternary structure, homotetramer. Requires Mg(2+) as cofactor.

The protein resides in the cytoplasm. It catalyses the reaction a 2'-deoxyribonucleoside 5'-diphosphate + ATP = a 2'-deoxyribonucleoside 5'-triphosphate + ADP. The enzyme catalyses a ribonucleoside 5'-diphosphate + ATP = a ribonucleoside 5'-triphosphate + ADP. Functionally, major role in the synthesis of nucleoside triphosphates other than ATP. The ATP gamma phosphate is transferred to the NDP beta phosphate via a ping-pong mechanism, using a phosphorylated active-site intermediate. This Prochlorococcus marinus (strain MIT 9301) protein is Nucleoside diphosphate kinase.